Here is a 252-residue protein sequence, read N- to C-terminus: Phosphoribosylaminoimidazole-succinocarboxamide synthase 1 (252 aa).

This sequence belongs to the SAICAR synthetase family.

It catalyses the reaction 5-amino-1-(5-phospho-D-ribosyl)imidazole-4-carboxylate + L-aspartate + ATP = (2S)-2-[5-amino-1-(5-phospho-beta-D-ribosyl)imidazole-4-carboxamido]succinate + ADP + phosphate + 2 H(+). It participates in purine metabolism; IMP biosynthesis via de novo pathway; 5-amino-1-(5-phospho-D-ribosyl)imidazole-4-carboxamide from 5-amino-1-(5-phospho-D-ribosyl)imidazole-4-carboxylate: step 1/2. The polypeptide is Phosphoribosylaminoimidazole-succinocarboxamide synthase 1 (purC1) (Caulobacter vibrioides (strain ATCC 19089 / CIP 103742 / CB 15) (Caulobacter crescentus)).